The chain runs to 118 residues: Small ribosomal subunit protein uS13 (118 aa).

Residues 94–118 are disordered; the sequence is SLPVHGQRTKTNARTCKGPRKPIKK.

Belongs to the universal ribosomal protein uS13 family. In terms of assembly, part of the 30S ribosomal subunit. Forms a loose heterodimer with protein S19. Forms two bridges to the 50S subunit in the 70S ribosome.

Its function is as follows. Located at the top of the head of the 30S subunit, it contacts several helices of the 16S rRNA. In the 70S ribosome it contacts the 23S rRNA (bridge B1a) and protein L5 of the 50S subunit (bridge B1b), connecting the 2 subunits; these bridges are implicated in subunit movement. Contacts the tRNAs in the A and P-sites. The protein is Small ribosomal subunit protein uS13 of Buchnera aphidicola subsp. Acyrthosiphon pisum (strain 5A).